Here is a 211-residue protein sequence, read N- to C-terminus: Protein-L-isoaspartate O-methyltransferase (211 aa).

The active site involves S60.

Belongs to the methyltransferase superfamily. L-isoaspartyl/D-aspartyl protein methyltransferase family.

Its subcellular location is the cytoplasm. It carries out the reaction [protein]-L-isoaspartate + S-adenosyl-L-methionine = [protein]-L-isoaspartate alpha-methyl ester + S-adenosyl-L-homocysteine. In terms of biological role, catalyzes the methyl esterification of L-isoaspartyl residues in peptides and proteins that result from spontaneous decomposition of normal L-aspartyl and L-asparaginyl residues. It plays a role in the repair and/or degradation of damaged proteins. This Pseudomonas fluorescens (strain SBW25) protein is Protein-L-isoaspartate O-methyltransferase.